The sequence spans 865 residues: General transcription factor 3C polypeptide 5 (865 aa).

5 disordered regions span residues 1–21, 111–163, 191–215, 391–522, and 669–865; these read MNDETNKNNSNINNNNNNNNS, RPNK…NEKF, NNNTKSESDNVNDSSSSSSSKTVPI, QDNH…NKEG, and DNKM…EESE. Low complexity-rich tracts occupy residues 7 to 21, 115 to 126, 140 to 158, 199 to 210, and 401 to 411; these read KNNSNINNNNNNNNS, QQTQTQTQTQTQ, QSPKTTSRSKQQQQQQQPQ, DNVNDSSSSSSS, and SKNNNNNNNNK. Composition is skewed to basic and acidic residues over residues 412–439 and 448–489; these read DSIKNKEKDNSNKEDKEHKEDKEDKQEE and NNEK…KGDD. 2 stretches are compositionally biased toward low complexity: residues 508–521 and 677–696; these read EGNNNNNNNNNNKE and RSNTSTATTTSTKSTQPKST. Composition is skewed to basic and acidic residues over residues 697-713, 757-766, and 773-786; these read QPKEPKLKSTQPKEPRP, QNKEIDESLK, and MEKDNEYLHGKNEE. 2 stretches are compositionally biased toward acidic residues: residues 800–820 and 839–865; these read DYDDDDDDEDKPFELLDDFDG and EDSEEDESDFDEEEEEEEEDFEFEESE.

The protein belongs to the TFIIIC subunit 5 family. In terms of assembly, part of the TFIIIC complex.

Its subcellular location is the nucleus. In terms of biological role, involved in RNA polymerase III-mediated transcription. Integral, tightly associated component of the DNA-binding TFIIIC2 subcomplex that directly binds tRNA and virus-associated RNA promoters. The polypeptide is General transcription factor 3C polypeptide 5 (gtf3c5) (Dictyostelium discoideum (Social amoeba)).